The chain runs to 193 residues: Histone H5 (193 aa).

Over residues 1-11 the composition is skewed to pro residues; sequence TDSPIPAPAPA. Disordered regions lie at residues 1–29 and 80–193; these read TDSPIPAPAPAAKPKRARAPRKPASHPTY and GVLK…PKKK. The segment covering 13–24 has biased composition (basic residues); that stretch reads KPKRARAPRKPA. Residues 25 to 98 enclose the H15 domain; sequence SHPTYSEMIA…GASGSFRLAK (74 aa). The span at 104–193 shows a compositional bias: basic residues; sequence RSPAGRKKKK…SGARKSPKKK (90 aa).

This sequence belongs to the histone H1/H5 family. In terms of tissue distribution, erythroid cells.

The protein resides in the nucleus. It localises to the chromosome. Its function is as follows. Histone H5 performs the same function as H1, being necessary for the condensation of nucleosome chains into higher order structures, and replaces histone H1 in certain cells. This Anser anser anser (Western greylag goose) protein is Histone H5.